Consider the following 308-residue polypeptide: Tetraacyldisaccharide 4'-kinase (308 aa).

63-70 (SFGGNGKT) provides a ligand contact to ATP.

This sequence belongs to the LpxK family.

The enzyme catalyses a lipid A disaccharide + ATP = a lipid IVA + ADP + H(+). The protein operates within glycolipid biosynthesis; lipid IV(A) biosynthesis; lipid IV(A) from (3R)-3-hydroxytetradecanoyl-[acyl-carrier-protein] and UDP-N-acetyl-alpha-D-glucosamine: step 6/6. In terms of biological role, transfers the gamma-phosphate of ATP to the 4'-position of a tetraacyldisaccharide 1-phosphate intermediate (termed DS-1-P) to form tetraacyldisaccharide 1,4'-bis-phosphate (lipid IVA). In Campylobacter jejuni subsp. jejuni serotype O:2 (strain ATCC 700819 / NCTC 11168), this protein is Tetraacyldisaccharide 4'-kinase.